Reading from the N-terminus, the 328-residue chain is RNA 3'-terminal phosphate cyclase (328 aa).

ATP-binding positions include Gln100 and 276–280 (HLADQ). His302 (tele-AMP-histidine intermediate) is an active-site residue.

This sequence belongs to the RNA 3'-terminal cyclase family. Type 1 subfamily.

The protein resides in the cytoplasm. The catalysed reaction is a 3'-end 3'-phospho-ribonucleotide-RNA + ATP = a 3'-end 2',3'-cyclophospho-ribonucleotide-RNA + AMP + diphosphate. In terms of biological role, catalyzes the conversion of 3'-phosphate to a 2',3'-cyclic phosphodiester at the end of RNA. The mechanism of action of the enzyme occurs in 3 steps: (A) adenylation of the enzyme by ATP; (B) transfer of adenylate to an RNA-N3'P to produce RNA-N3'PP5'A; (C) and attack of the adjacent 2'-hydroxyl on the 3'-phosphorus in the diester linkage to produce the cyclic end product. The biological role of this enzyme is unknown but it is likely to function in some aspects of cellular RNA processing. In Archaeoglobus fulgidus (strain ATCC 49558 / DSM 4304 / JCM 9628 / NBRC 100126 / VC-16), this protein is RNA 3'-terminal phosphate cyclase (rtcA).